Here is a 361-residue protein sequence, read N- to C-terminus: Peptide chain release factor 1 (361 aa).

Q237 carries the post-translational modification N5-methylglutamine. The segment covering 287-297 has biased composition (basic and acidic residues); it reads KQQKEQSDTRK. Residues 287-307 form a disordered region; that stretch reads KQQKEQSDTRKNLVGSGDRSE.

Belongs to the prokaryotic/mitochondrial release factor family. In terms of processing, methylated by PrmC. Methylation increases the termination efficiency of RF1.

The protein localises to the cytoplasm. Functionally, peptide chain release factor 1 directs the termination of translation in response to the peptide chain termination codons UAG and UAA. The protein is Peptide chain release factor 1 of Francisella philomiragia subsp. philomiragia (strain ATCC 25017 / CCUG 19701 / FSC 153 / O#319-036).